Consider the following 303-residue polypeptide: N-acetyl-D-glucosamine kinase (303 aa).

ATP-binding positions include 4 to 11 (GFDIGGTK) and 133 to 140 (GVGGGLVF). Zn(2+) is bound by residues histidine 157, cysteine 177, cysteine 179, and cysteine 184.

It belongs to the ROK (NagC/XylR) family. NagK subfamily.

It catalyses the reaction N-acetyl-D-glucosamine + ATP = N-acetyl-D-glucosamine 6-phosphate + ADP + H(+). It participates in cell wall biogenesis; peptidoglycan recycling. Functionally, catalyzes the phosphorylation of N-acetyl-D-glucosamine (GlcNAc) derived from cell-wall degradation, yielding GlcNAc-6-P. The chain is N-acetyl-D-glucosamine kinase from Shigella flexneri serotype 5b (strain 8401).